The following is a 301-amino-acid chain: MKIGILSQFPQLYSTQRLVEACQSRGHEAVVINTLNCYMNINSIKPSIHYEGTELVGFDAIIPRIHASVTFYGCAVVRQFEMMGVYAANDSISIARSRDKLRALQLLSRKGIGMPVTGFANKPNDIPDLINMVGGAPLVIKLLEGTQGIGVVLAETKTAAESVIEAFLGLKANILVQEYIKESNGSDIRCFVVGDKVIASMKRQGPEGDFRSNLHLGGCGEVVKITAVERKMAIAAVKAMGLVVAGVDILRSNRGPLILEVNSAPGIEGIEQTTGISVTEPIVEYIEKMVAARKTNRPIIA.

Residues 104-287 (LQLLSRKGIG…VTEPIVEYIE (184 aa)) enclose the ATP-grasp domain. ATP-binding positions include Lys141, 178 to 179 (EY), Asp187, and 211 to 213 (RSN). Mg(2+) is bound by residues Asp248, Glu260, and Asn262. Mn(2+)-binding residues include Asp248, Glu260, and Asn262.

It belongs to the RimK family. Requires Mg(2+) as cofactor. The cofactor is Mn(2+).

The protein is Probable alpha-L-glutamate ligase 1 of Shewanella baltica (strain OS155 / ATCC BAA-1091).